The chain runs to 414 residues: Gamma-glutamyl phosphate reductase (414 aa).

It belongs to the gamma-glutamyl phosphate reductase family.

The protein resides in the cytoplasm. The catalysed reaction is L-glutamate 5-semialdehyde + phosphate + NADP(+) = L-glutamyl 5-phosphate + NADPH + H(+). It participates in amino-acid biosynthesis; L-proline biosynthesis; L-glutamate 5-semialdehyde from L-glutamate: step 2/2. Catalyzes the NADPH-dependent reduction of L-glutamate 5-phosphate into L-glutamate 5-semialdehyde and phosphate. The product spontaneously undergoes cyclization to form 1-pyrroline-5-carboxylate. The polypeptide is Gamma-glutamyl phosphate reductase (Limosilactobacillus reuteri (strain DSM 20016) (Lactobacillus reuteri)).